Reading from the N-terminus, the 542-residue chain is Ribulokinase 2 (542 aa).

Belongs to the ribulokinase family.

The catalysed reaction is D-ribulose + ATP = D-ribulose 5-phosphate + ADP + H(+). It catalyses the reaction L-ribulose + ATP = L-ribulose 5-phosphate + ADP + H(+). It participates in carbohydrate degradation; L-arabinose degradation via L-ribulose; D-xylulose 5-phosphate from L-arabinose (bacterial route): step 2/3. In Staphylococcus saprophyticus subsp. saprophyticus (strain ATCC 15305 / DSM 20229 / NCIMB 8711 / NCTC 7292 / S-41), this protein is Ribulokinase 2.